Consider the following 403-residue polypeptide: MRLSRLLIGASLGVALSSTVFTAALADVKFGSLYPISGSLALLGEESARGLELAVDEVNAAGGIKGEKVVLERGDAVDNNQATGEARRLISLVGVKAIFGTYSSARVIAASQVSELAGIPYFEMGAVADEVTGRGLQYLFRTNPTAENMAKDSVDMLIKGIAPGLGKDPKDMKIGIIYEDSSYGTSVAGHQEDNAKAAGLTVVLKSGYPSNTVDMSSLVLELREKGADVVMQTSYQNDSVLFLQQANEAGYKPLAIIGGGGGYSMQPTADAVGHDLIDGVFDADYTQYAVNTSATPGLTEFVEAYKAKYGSQPRSGHSLTNYVGAKAIFQALNAGEGFEPDQIVSAVKALDIPDGQTAAGYGVKFGKNNQNERATMMGMQWQDGKLVTVYPENAAIAKMRFKK.

Residues 1–26 (MRLSRLLIGASLGVALSSTVFTAALA) form the signal peptide.

The protein belongs to the leucine-binding protein family.

Functionally, component of an amino-acid transport system. The protein is Leu/Ile/Val-binding protein homolog 8 of Brucella abortus (strain 2308).